The primary structure comprises 442 residues: Transcriptional coactivator YAP1 (442 aa).

A phosphoserine; by LATS1 and LATS2 mark is found at Ser21, Ser69, and Ser87. Disordered stretches follow at residues 51–89 and 97–116; these read LPDS…HSSP and VSPG…QHLR. Position 119 is a phosphoserine; by LATS1 and LATS2 (Ser119). WW domains lie at 126 to 159 and 186 to 219; these read MPLP…DPRK and GPLP…DPRL. A disordered region spans residues 230-254; sequence ISQSAPVKQGSQLPSSPQSGVMSGN. Residues 238–249 are compositionally biased toward low complexity; sequence QGSQLPSSPQSG. The transactivation domain stretch occupies residues 247–442; sequence QSGVMSGNNP…IDKENFLTWL (196 aa). Residues 258 to 279 are a coiled coil; the sequence is RLQQIHIEKERLRIKQELLRQR. Residues 286–374 form a disordered region; sequence RNQLPTSMEQ…DTLGPGSMAT (89 aa). 3 stretches are compositionally biased toward polar residues: residues 288–304, 313–329, and 337–347; these read QLPT…NPVS, RNMT…SGTY, and DSGLSMSSYSV.

This sequence belongs to the YAP1 family. Post-translationally, phosphorylated by lats1 and lats2; leading to cytoplasmic translocation and inactivation. In terms of tissue distribution, expressed in the notochord, brain, eyes, branchial arches and pectoral fins.

It localises to the cytoplasm. Its subcellular location is the nucleus. The protein resides in the cell junction. The protein localises to the tight junction. It is found in the cell membrane. Transcriptional regulator which can act both as a coactivator and a corepressor and is the critical downstream regulatory target in the Hippo signaling pathway that plays a pivotal role in organ size control and tumor suppression by restricting proliferation and promoting apoptosis. Required for expansion of the neural plate and neural plate border zone progenitor pools. Acts as a direct regulator of pax3 expression via interaction with tead1. Plays a key role in tissue tension and 3D tissue shape by regulating cortical actomyosin network formation. This chain is Transcriptional coactivator YAP1 (yap1), found in Danio rerio (Zebrafish).